The following is a 114-amino-acid chain: Probable 4-amino-4-deoxy-L-arabinose-phosphoundecaprenol flippase subunit ArnE (114 aa).

3 consecutive transmembrane segments (helical) span residues Leu-38–Leu-58, Leu-64–Ala-84, and Leu-94–Leu-114. Positions Leu-43–Trp-112 constitute an EamA domain.

It belongs to the ArnE family. As to quaternary structure, heterodimer of ArnE and ArnF.

It localises to the cell inner membrane. It functions in the pathway bacterial outer membrane biogenesis; lipopolysaccharide biosynthesis. Translocates 4-amino-4-deoxy-L-arabinose-phosphoundecaprenol (alpha-L-Ara4N-phosphoundecaprenol) from the cytoplasmic to the periplasmic side of the inner membrane. The sequence is that of Probable 4-amino-4-deoxy-L-arabinose-phosphoundecaprenol flippase subunit ArnE from Yersinia pseudotuberculosis serotype O:1b (strain IP 31758).